The primary structure comprises 194 residues: Calcium channel flower (194 aa).

The next 3 membrane-spanning stretches (helical) occupy residues 34-54, 59-79, and 107-127; these read LLGIVAAFFAILFGLWNVFSI, VSCLVAGIIQMVAGFVVMLLE, and GLYIAMAIPPIILCFGLASLF.

It belongs to the calcium channel flower family. In terms of assembly, homomultimer. Associates with the dally/ magu complex.

It localises to the cell membrane. The protein resides in the cytoplasmic vesicle. Its subcellular location is the secretory vesicle. It is found in the synaptic vesicle membrane. The protein localises to the presynaptic cell membrane. It localises to the endosome. Channel activity is inhibited by La(3+), which reduces Ca(2+) influx and thus inhibits it's function in promoting activity-dependent bulk endocytosis (ADBE) in response to high stimuli. Transmembrane protein which mediates synaptic endocytosis, fitness-based cell culling, neuronal culling, morphogen gradient scaling, and calcium transport. Regulates synaptic endocytosis and hence couples exo- with endocytosis. Controls two major modes of synaptic vesicle (SV) endocytosis in the synaptic boutons of neuromuscular junctions (NMJs); Ca(2+) channel-independent Clathrin-mediated endocytosis (CME) in response to mild stimulation, and Ca(2+) channel-dependent activity-dependent bulk endocytosis (ADBE) in response to strong stimulation. Functions in ADBE and subsequent SV reformation from bulk endosomes by initiating Ca(2+) channel-dependent phosphatidylinositol 4,5-bisphosphate (PtdIns(4,5)P2) compartmentalization in synaptic boutons. There it acts at the periactive zone to provide the low Ca(2+) levels required to initiate Calcineurin activation and upregulate PtdIns(4,5)P2. Conversely PtdIns(4,5)P2 enhances fwe Ca(2+) channel-activity, establishing a positive feedback loop that induces PtdIns(4,5)P2 microdomain at the periactive zone. These microdomains trigger bulk membrane invagination (i.e. ADBE) by triggering actin polymerization while also promoting localization of fwe to bulk endosomes, thereby removing the ADBE trigger to reduce endocytosis and prevent excess membrane uptake. PtdIns(4,5)P2 then promotes SV reformation from the bulk endosomes, to coordinate ADBE and subsequent SV reformation. Different combinations of the flower isoforms at the cell membrane are also required for the identification and elimination of suboptimal or supernumerary cells during development, regeneration, and adulthood. Required for the recognition and elimination of unfit cells in the developing wing during cell competition. In the developing pupal retina, mediates the elimination of unwanted postmitotic neurons, including supernumerary photoreceptor neurons that form at the periphery of the retina and are contained within incomplete ommatidia units. Also required for efficient elimination and replacement of old neurons by newly generated neurons during regeneration in the adult brain following mechanical injury. Downstream of the flower fitness fingerprints, cells identified as unwanted or unfit are eliminated via apoptosis through the expression of ahuizotl (azot). However, the cells marked for elimination by the flower isoforms only undergo apoptosis if additional thresholds are met; (1) their neighboring fit/healthy cells express different levels of the fwe isoforms, and (2) the levels of the protective signal SPARC expressed by the loser or unwanted cells are unable to inhibit caspase activation. These additional thresholds for flower-mediated apoptosis, allows useful cells to recover from transient and limited stress before they are unnecessarily eliminated. Functions with dally and magu in a mechanism of scaling, which utilises apoptosis to ensure that the dpp morphogen gradient, which mediates organ growth, remains proportional to the size of the growing wing. In this mechanism, fwe represses dally- and Magu-dependent activity in expanding the gradient, and dally/Magu inhibits fwe-dependent apoptosis to keep cell death rate low. When the levels of these different proteins are optimally regulated the gradient correctly scales with organ growth but when this fails, fwe-mediated apoptosis is activated to trim the developing tissue to match the correct size of the gradient. The sequence is that of Calcium channel flower from Drosophila erecta (Fruit fly).